The chain runs to 460 residues: Putative glycoside/cation symporter YagG (460 aa).

Topologically, residues 1–9 (MTQLTMKDK) are cytoplasmic. The next 2 membrane-spanning stretches (helical) occupy residues 10-30 (IGYG…MFLL) and 31-51 (AYFY…LFLV). The Cytoplasmic segment spans residues 52-78 (SRVLDAVTDPLMGLLVDRTRTRHGQFR). A helical transmembrane segment spans residues 79–99 (PFLLWGAIPFGIVCVLTFYTP). Topologically, residues 100-106 (DFSAQGK) are periplasmic. The helical transmembrane segment at 107 to 127 (IIYACVTYILLTLVYTFVNVP) threads the bilayer. At 128 to 150 (YCAMPGVITADPKERHALQSWRF) the chain is on the cytoplasmic side. A helical membrane pass occupies residues 151–171 (FLAAAGSLAISGIALPLVSII). Residues 172-179 (GKGDEQVG) are Periplasmic-facing. A helical transmembrane segment spans residues 180-200 (YFGAMCVLGLSGVVLLYVCFF). Over 201–262 (TTKERYTFEV…FVKYVMDHPE (62 aa)) the chain is Cytoplasmic. A helical transmembrane segment spans residues 263 to 283 (LATQFLLYGSLATMFGSLCSS). The Periplasmic portion of the chain corresponds to 284-308 (RLLGRFDRVTAFKWIIVAYSLISLL). A helical membrane pass occupies residues 309–329 (IFVTPAEHIALIFALNILFLF). The Cytoplasmic portion of the chain corresponds to 330–366 (VFNTTTPLQWLMASDVVDYEESRSGRRLDGLVFSTYL). Residues 367 to 387 (FSLKIGLAIGGAVVGWILAYV) form a helical membrane-spanning segment. Residues 388-405 (NYSASSSVQPVEVLTTIK) are Periplasmic-facing. The chain crosses the membrane as a helical span at residues 406–426 (ILFCVVPVVLYAGMFIMLSLY). Over 427–460 (KLTDARVEAISRQLIKHRAAQGEAVPDAATAASH) the chain is Cytoplasmic.

The protein belongs to the sodium:galactoside symporter (TC 2.A.2) family.

The protein resides in the cell inner membrane. This is Putative glycoside/cation symporter YagG (yagG) from Escherichia coli (strain K12).